The sequence spans 205 residues: MIGRLRGVLIEKQAPEVLIDVNGVGYELQMPLTSFYELPEVNQPTTVYTHFVVREDAQLLYGFITKQERSLFRLLIKANGVGPKLALTILSGMTASEFVGCVERDDIVTLVKLPGVGKKTAERLLVEMRDKLKSLMEASVGSEREFVLQSNYSPAPTVNSAEEDAISALISLGYKPPQASKAVSAAYKEGMDSETLIKAALKSML.

Residues 1–64 (MIGRLRGVLI…EDAQLLYGFI (64 aa)) are domain I. The segment at 65–143 (TKQERSLFRL…SLMEASVGSE (79 aa)) is domain II. The segment at 144–156 (REFVLQSNYSPAP) is flexible linker. The domain III stretch occupies residues 157–205 (TVNSAEEDAISALISLGYKPPQASKAVSAAYKEGMDSETLIKAALKSML).

The protein belongs to the RuvA family. Homotetramer. Forms an RuvA(8)-RuvB(12)-Holliday junction (HJ) complex. HJ DNA is sandwiched between 2 RuvA tetramers; dsDNA enters through RuvA and exits via RuvB. An RuvB hexamer assembles on each DNA strand where it exits the tetramer. Each RuvB hexamer is contacted by two RuvA subunits (via domain III) on 2 adjacent RuvB subunits; this complex drives branch migration. In the full resolvosome a probable DNA-RuvA(4)-RuvB(12)-RuvC(2) complex forms which resolves the HJ.

It localises to the cytoplasm. Its function is as follows. The RuvA-RuvB-RuvC complex processes Holliday junction (HJ) DNA during genetic recombination and DNA repair, while the RuvA-RuvB complex plays an important role in the rescue of blocked DNA replication forks via replication fork reversal (RFR). RuvA specifically binds to HJ cruciform DNA, conferring on it an open structure. The RuvB hexamer acts as an ATP-dependent pump, pulling dsDNA into and through the RuvAB complex. HJ branch migration allows RuvC to scan DNA until it finds its consensus sequence, where it cleaves and resolves the cruciform DNA. The chain is Holliday junction branch migration complex subunit RuvA from Shewanella sp. (strain MR-7).